We begin with the raw amino-acid sequence, 477 residues long: Zinc metalloproteinase/disintegrin (477 aa).

The signal sequence occupies residues 1–19 (MIQVLLVIICLAVPYQGSS). The propeptide occupies 20–186 (IILESGNVND…PIKKASQSNL (167 aa)). In terms of domain architecture, Peptidase M12B spans 192–388 (RYIELVIVAD…QKPQCILNKP (197 aa)). 2 residues coordinate Ca(2+): Glu-195 and Asp-279. Cystine bridges form between Cys-303–Cys-383, Cys-343–Cys-367, and Cys-345–Cys-350. Residue His-328 coordinates Zn(2+). The active site involves Glu-329. Positions 332 and 338 each coordinate Zn(2+). Positions 383 and 386 each coordinate Ca(2+). Residues 389-404 (LRTDTVSTPVSGNELL) constitute a propeptide that is removed on maturation. The Disintegrin domain maps to 396–477 (TPVSGNELLE…AGCPRNPFHA (82 aa)). 6 disulfides stabilise this stretch: Cys-410–Cys-425, Cys-412–Cys-420, Cys-419–Cys-442, Cys-433–Cys-439, Cys-438–Cys-463, and Cys-451–Cys-470. A Cell attachment site motif is present at residues 455 to 457 (RGD).

This sequence belongs to the venom metalloproteinase (M12B) family. P-II subfamily. P-IIa sub-subfamily. As to quaternary structure, monomer. Zn(2+) serves as cofactor. In terms of tissue distribution, expressed by the venom gland.

The protein localises to the secreted. Functionally, impairs hemostasis in the envenomed animal. In terms of biological role, inhibits platelet aggregation induced by ADP, thrombin, platelet-activating factor and collagen. Acts by inhibiting fibrinogen interaction with platelet receptors GPIIb/GPIIIa (ITGA2B/ITGB3). This is Zinc metalloproteinase/disintegrin from Gloydius halys (Chinese water mocassin).